A 104-amino-acid chain; its full sequence is Complex III assembly factor LYRM7 (104 aa).

Ser-60 is subject to Phosphoserine.

This sequence belongs to the complex I LYR family. As to quaternary structure, interacts with UQCRFS1.

It localises to the mitochondrion matrix. Assembly factor required for Rieske Fe-S protein UQCRFS1 incorporation into the cytochrome b-c1 (CIII) complex. Functions as a chaperone, binding to this subunit within the mitochondrial matrix and stabilizing it prior to its translocation and insertion into the late CIII dimeric intermediate within the mitochondrial inner membrane. The chain is Complex III assembly factor LYRM7 (Lyrm7) from Mus musculus (Mouse).